The primary structure comprises 258 residues: Imidazole glycerol phosphate synthase subunit HisF (258 aa).

Residues D11 and D130 contribute to the active site.

This sequence belongs to the HisA/HisF family. Heterodimer of HisH and HisF.

The protein localises to the cytoplasm. It carries out the reaction 5-[(5-phospho-1-deoxy-D-ribulos-1-ylimino)methylamino]-1-(5-phospho-beta-D-ribosyl)imidazole-4-carboxamide + L-glutamine = D-erythro-1-(imidazol-4-yl)glycerol 3-phosphate + 5-amino-1-(5-phospho-beta-D-ribosyl)imidazole-4-carboxamide + L-glutamate + H(+). It functions in the pathway amino-acid biosynthesis; L-histidine biosynthesis; L-histidine from 5-phospho-alpha-D-ribose 1-diphosphate: step 5/9. IGPS catalyzes the conversion of PRFAR and glutamine to IGP, AICAR and glutamate. The HisF subunit catalyzes the cyclization activity that produces IGP and AICAR from PRFAR using the ammonia provided by the HisH subunit. The sequence is that of Imidazole glycerol phosphate synthase subunit HisF from Synechococcus sp. (strain CC9902).